We begin with the raw amino-acid sequence, 491 residues long: UDP-N-acetylmuramate--L-alanine ligase (491 aa).

126–132 contributes to the ATP binding site; the sequence is GTHGKTT.

The protein belongs to the MurCDEF family.

Its subcellular location is the cytoplasm. The enzyme catalyses UDP-N-acetyl-alpha-D-muramate + L-alanine + ATP = UDP-N-acetyl-alpha-D-muramoyl-L-alanine + ADP + phosphate + H(+). It functions in the pathway cell wall biogenesis; peptidoglycan biosynthesis. Functionally, cell wall formation. The chain is UDP-N-acetylmuramate--L-alanine ligase from Salmonella choleraesuis (strain SC-B67).